The primary structure comprises 314 residues: MKAKIVPEKTNLHPRNLHKFGYDFEALTTCSSELKNHVFTNEYDTQTINFSNPEAVKALNNALLIAYYNIKNWGIPQDYLCPPIPGRADYLHYIADLLATTNNQIIPEGENVIGLDIGIGANCIYPIIGNAIYDWSFVGTDIDEKAIQNCKKIIENNPKLIDAISLQQQVESRFIFKNIILTDDKFAFTICNPPFHNSAAEATKSSARKVNNLQEIRTKNPVLNFGGQNTELWCDGGEIGFITQMIYESAKYPMQVLWFTTLVSKRENLSSIYKTLNKVSAVEIKTIDMAQGQKNSRIVAWTFLSELQQKAWRF.

Belongs to the methyltransferase superfamily. METTL16/RlmF family.

The protein localises to the cytoplasm. It catalyses the reaction adenosine(1618) in 23S rRNA + S-adenosyl-L-methionine = N(6)-methyladenosine(1618) in 23S rRNA + S-adenosyl-L-homocysteine + H(+). Functionally, specifically methylates the adenine in position 1618 of 23S rRNA. The protein is Ribosomal RNA large subunit methyltransferase F of Flavobacterium psychrophilum (strain ATCC 49511 / DSM 21280 / CIP 103535 / JIP02/86).